A 405-amino-acid polypeptide reads, in one-letter code: Transcriptional regulatory protein DEP1 (405 aa).

Residues 1-12 show a composition bias toward low complexity; that stretch reads MSQQTPQESEQT. 2 disordered regions span residues 1–26 and 49–171; these read MSQQTPQESEQTTAKEQDLDQESVLS and AGTE…VMPS. Ser56 is modified (phosphoserine). 2 stretches are compositionally biased toward basic and acidic residues: residues 86 to 108 and 116 to 139; these read SLKRPHEDEKEAIDEAKKMKVPG and EEEKSQELEEAIDSKEKSTDARDE. The residue at position 120 (Ser120) is a Phosphoserine. The span at 140–157 shows a compositional bias: acidic residues; it reads QGDEGDNEEENNEEDNEN. A Phosphoserine modification is found at Ser370.

Component of the RPD3C(L) complex composed of at least ASH1, CTI6, DEP1, PHO23, RPD3, RXT2, RXT3, SAP30, SDS3, SIN3, UME1 and UME6.

The protein localises to the cytoplasm. It localises to the nucleus. Its function is as follows. Component of the RPD3C(L) histone deacetylase complex (HDAC) responsible for the deacetylation of lysine residues on the N-terminal part of the core histones (H2A, H2B, H3 and H4). Histone deacetylation gives a tag for epigenetic repression and plays an important role in transcriptional regulation, cell cycle progression and developmental events. This chain is Transcriptional regulatory protein DEP1 (DEP1), found in Saccharomyces cerevisiae (strain ATCC 204508 / S288c) (Baker's yeast).